Consider the following 304-residue polypeptide: UDP-3-O-acyl-N-acetylglucosamine deacetylase (304 aa).

3 residues coordinate Zn(2+): His-78, His-237, and Asp-241. His-264 functions as the Proton donor in the catalytic mechanism.

Belongs to the LpxC family. Zn(2+) serves as cofactor.

The catalysed reaction is a UDP-3-O-[(3R)-3-hydroxyacyl]-N-acetyl-alpha-D-glucosamine + H2O = a UDP-3-O-[(3R)-3-hydroxyacyl]-alpha-D-glucosamine + acetate. Its pathway is glycolipid biosynthesis; lipid IV(A) biosynthesis; lipid IV(A) from (3R)-3-hydroxytetradecanoyl-[acyl-carrier-protein] and UDP-N-acetyl-alpha-D-glucosamine: step 2/6. In terms of biological role, catalyzes the hydrolysis of UDP-3-O-myristoyl-N-acetylglucosamine to form UDP-3-O-myristoylglucosamine and acetate, the committed step in lipid A biosynthesis. The protein is UDP-3-O-acyl-N-acetylglucosamine deacetylase of Polynucleobacter asymbioticus (strain DSM 18221 / CIP 109841 / QLW-P1DMWA-1) (Polynucleobacter necessarius subsp. asymbioticus).